A 33-amino-acid polypeptide reads, in one-letter code: MSIEVIAQLASLALIIVLGPLVIGLLAARKGNL.

The helical transmembrane segment at 5 to 25 threads the bilayer; the sequence is VIAQLASLALIIVLGPLVIGL.

It belongs to the Psb30/Ycf12 family. PSII is composed of 1 copy each of membrane proteins PsbA, PsbB, PsbC, PsbD, PsbE, PsbF, PsbH, PsbI, PsbJ, PsbK, PsbL, PsbM, PsbT, PsbX, PsbY, PsbZ, Psb30/Ycf12, peripheral proteins of the oxygen-evolving complex and a large number of cofactors. It forms dimeric complexes.

Its subcellular location is the plastid. It is found in the chloroplast thylakoid membrane. In terms of biological role, a core subunit of photosystem II (PSII), probably helps stabilize the reaction center. The chain is Photosystem II reaction center protein Psb30 from Chara vulgaris (Common stonewort).